The following is a 736-amino-acid chain: Factor of DNA methylation 4 (736 aa).

2 stretches are compositionally biased toward basic and acidic residues: residues 80–90 and 144–167; these read RKYLRPRERPR and DSGR…SNED. Residues 80–167 form a disordered region; sequence RKYLRPRERP…KPDPFFSNED (88 aa). A coiled-coil region spans residues 360–597; the sequence is TLVSNLENTL…RSMRELTTRA (238 aa).

Functionally, acts in association with FDM3 and FDM5 for RNA-directed DNA methylation (RdDM). The sequence is that of Factor of DNA methylation 4 from Arabidopsis thaliana (Mouse-ear cress).